The sequence spans 226 residues: ATP-dependent dethiobiotin synthetase BioD (226 aa).

12-17 (GVGKTV) serves as a coordination point for ATP. A Mg(2+)-binding site is contributed by threonine 16. Residue lysine 37 is part of the active site. Residue threonine 41 coordinates substrate. ATP is bound by residues aspartate 49, 108-111 (EGAG), 169-170 (GS), and 197-199 (PAG). Positions 49 and 108 each coordinate Mg(2+).

Belongs to the dethiobiotin synthetase family. Homodimer. Mg(2+) serves as cofactor.

The protein localises to the cytoplasm. It carries out the reaction (7R,8S)-7,8-diammoniononanoate + CO2 + ATP = (4R,5S)-dethiobiotin + ADP + phosphate + 3 H(+). Its pathway is cofactor biosynthesis; biotin biosynthesis; biotin from 7,8-diaminononanoate: step 1/2. In terms of biological role, catalyzes a mechanistically unusual reaction, the ATP-dependent insertion of CO2 between the N7 and N8 nitrogen atoms of 7,8-diaminopelargonic acid (DAPA, also called 7,8-diammoniononanoate) to form a ureido ring. This Mycobacterium leprae (strain Br4923) protein is ATP-dependent dethiobiotin synthetase BioD.